The chain runs to 332 residues: Processive diacylglycerol alpha-glucosyltransferase (332 aa).

The protein belongs to the glycosyltransferase group 1 family. Glycosyltransferase 4 subfamily. Mg(2+) serves as cofactor.

The protein resides in the cell membrane. It carries out the reaction a 1,2-diacyl-sn-glycerol + UDP-alpha-D-glucose = a 1,2-diacyl-3-O-(alpha-D-glucopyranosyl)-sn-glycerol + UDP + H(+). The catalysed reaction is a 1,2-diacyl-3-O-(alpha-D-glucopyranosyl)-sn-glycerol + UDP-alpha-D-glucose = a 1,2-diacyl-3-O-[alpha-D-glucosyl-(1-&gt; 2)-alpha-D-glucosyl]-sn-glycerol + UDP + H(+). It functions in the pathway glycolipid metabolism; diglucosyl-diacylglycerol biosynthesis. Its activity is regulated as follows. Activated by the negatively charged lipids phosphatidylglycerol (PG), cardiolipin (CL), nonbilayer-prone 1,3-DAG, 1,2-dioleoylphosphatidylglycerol (DOPG) and 1,2-dioleoylphosphatidylserine (DOPS). Inhibited by 1,2-diacyl-3-O-(alpha-D-galactopyranosyl)-sn-glycerol, 1,2-diacyl-3-O-[6-O-acyl(alpha-D-glucopyranosyl)]-sn-glycerol and 1,2-diacyl-3-O-[alpha-D-glucopyranosyl-(1-&gt;2)-O-(6-O-acyl-alpha-D-glucopyranosyl)]-sn-glycerol. In terms of biological role, processive glucosyltransferase involved in the biosynthesis of both the non-bilayer-prone alpha-monoglucosyldiacylglycerol and the bilayer-forming membrane lipid alpha-diglucosyldiacylglycerol. These are major components for maintaining the anionic lipid surface charge density, for balancing the bilayer to non-bilayer phase equilibria and for keeping a constant lipid bilayer spontaneous curvature (curvature packing stress). Catalyzes the transfer of a glucosyl residue from UDP-Glc to diacylglycerol (DAG) acceptor to form the corresponding alpha-glucosyl-DAG (1,2-diacyl-3-O-(alpha-D-glucopyranosyl)-sn-glycerol), which then acts as acceptor to give alpha-diglucosyl-DAG product (3-O-(alpha-D-glucopyranosyl-alpha-(1-&gt;2)-D-glucopyranosyl)-1,2-diacyl-sn-glycerol). It can only use UDP-Glc as sugar donor. This chain is Processive diacylglycerol alpha-glucosyltransferase (dgs), found in Acholeplasma laidlawii.